The chain runs to 294 residues: Nucleotide-binding protein Daud_0300 (294 aa).

An ATP-binding site is contributed by 11-18; that stretch reads GLSGAGKT. A GTP-binding site is contributed by 62 to 65; sequence DIRG.

The protein belongs to the RapZ-like family.

Functionally, displays ATPase and GTPase activities. The sequence is that of Nucleotide-binding protein Daud_0300 from Desulforudis audaxviator (strain MP104C).